Here is a 342-residue protein sequence, read N- to C-terminus: MKALVKENAEPGLWLADVPEPTIGSGDVLIKVLRTGICGTDLHIRAWDGWAQQAIRTPLVVGHEFVGEVVDTGRDVTDIKAGDRVSGEGHLVCGKCRNCLAGRRHLCRATVGLGVGRDGAFAEYVALPASNVWVHRVPVDLDVAAIFDPFGNAVHTALSFPLVGEDVLITGAGPIGLMAAAVARHAGARNVVITDVSEERLELARKVGATLALNVSDATIADGQRELGLREGFDIGLEMSGRPEAMRDMIANMTHGGRIAMLGLPAEEFPVDWARVVTSMITVKGIYGREMFETWYAMSVLLEGGLDLAPVITGRYSHRDFEAAFADAASGRGGKVILDWTA.

C38 is a binding site for Zn(2+). Active-site charge relay system residues include T40 and H43. The Zn(2+) site is built by H63, E64, C93, C96, C99, and C107. NAD(+) is bound by residues I175, D195, R200, 262-264, and 286-287; these read LGL and IY.

This sequence belongs to the zinc-containing alcohol dehydrogenase family. As to quaternary structure, homotetramer. Zn(2+) is required as a cofactor.

It is found in the cytoplasm. The catalysed reaction is L-threonine + NAD(+) = (2S)-2-amino-3-oxobutanoate + NADH + H(+). The protein operates within amino-acid degradation; L-threonine degradation via oxydo-reductase pathway; glycine from L-threonine: step 1/2. Functionally, catalyzes the NAD(+)-dependent oxidation of L-threonine to 2-amino-3-ketobutyrate. The sequence is that of L-threonine 3-dehydrogenase from Streptomyces coelicolor (strain ATCC BAA-471 / A3(2) / M145).